Consider the following 349-residue polypeptide: Flap endonuclease 1 (349 aa).

An N-domain region spans residues 1–98 (MDLGEIVEDV…EEIERRKRAK (98 aa)). The Mg(2+) site is built by Asp27, Asp80, Glu152, Glu154, Asp173, Asp175, and Asp236. Residues 116–258 (EIRKYAQAAV…TALRIIKKYN (143 aa)) are I-domain. Residues 341–349 (KQTGLDQWF) form an interaction with PCNA region.

It belongs to the XPG/RAD2 endonuclease family. FEN1 subfamily. As to quaternary structure, interacts with PCNA. PCNA stimulates the nuclease activity without altering cleavage specificity. Requires Mg(2+) as cofactor.

In terms of biological role, structure-specific nuclease with 5'-flap endonuclease and 5'-3' exonuclease activities involved in DNA replication and repair. During DNA replication, cleaves the 5'-overhanging flap structure that is generated by displacement synthesis when DNA polymerase encounters the 5'-end of a downstream Okazaki fragment. Binds the unpaired 3'-DNA end and kinks the DNA to facilitate 5' cleavage specificity. Cleaves one nucleotide into the double-stranded DNA from the junction in flap DNA, leaving a nick for ligation. Also involved in the base excision repair (BER) pathway. Acts as a genome stabilization factor that prevents flaps from equilibrating into structures that lead to duplications and deletions. Also possesses 5'-3' exonuclease activity on nicked or gapped double-stranded DNA. The chain is Flap endonuclease 1 from Sulfolobus acidocaldarius (strain ATCC 33909 / DSM 639 / JCM 8929 / NBRC 15157 / NCIMB 11770).